The following is a 137-amino-acid chain: Nucleoside diphosphate kinase (137 aa).

The ATP site is built by K9, F57, R85, T91, R102, and N112. H115 serves as the catalytic Pros-phosphohistidine intermediate.

This sequence belongs to the NDK family. Homotetramer. Requires Mg(2+) as cofactor.

The protein localises to the cytoplasm. It catalyses the reaction a 2'-deoxyribonucleoside 5'-diphosphate + ATP = a 2'-deoxyribonucleoside 5'-triphosphate + ADP. It carries out the reaction a ribonucleoside 5'-diphosphate + ATP = a ribonucleoside 5'-triphosphate + ADP. In terms of biological role, major role in the synthesis of nucleoside triphosphates other than ATP. The ATP gamma phosphate is transferred to the NDP beta phosphate via a ping-pong mechanism, using a phosphorylated active-site intermediate. In Campylobacter jejuni subsp. jejuni serotype O:2 (strain ATCC 700819 / NCTC 11168), this protein is Nucleoside diphosphate kinase.